We begin with the raw amino-acid sequence, 289 residues long: Rhodopsin (289 aa).

The Extracellular portion of the chain corresponds to 1–7 (YLVNPAA). Residues 8-32 (YAAPGAYMFLLILVGFPVNFLTLYV) traverse the membrane as a helical segment. Residues 33–44 (TLEHKKLRTPLN) are Cytoplasmic-facing. Residues 45-67 (YILLNLAVADLFMVLGGFTTTMY) traverse the membrane as a helical segment. Over 68-81 (TSMHGYFVLGRLGC) the chain is Extracellular. Residues C81 and C158 are joined by a disulfide bond. A helical transmembrane segment spans residues 82–104 (NLEGFFATLGGEIALWSLVVLAI). Positions 105–107 (ERW) match the 'Ionic lock' involved in activated form stabilization motif. The Cytoplasmic segment spans residues 105-123 (ERWIVVCKPISNFRFTEDH). The helical transmembrane segment at 124-144 (AIMGLAFSWVMALTCAVPPLV) threads the bilayer. Over 145–173 (GWSRYIPEGMQCSCGVDYYTRAEGFNNES) the chain is Extracellular. N-linked (GlcNAc...) asparagine glycosylation occurs at N171. The chain crosses the membrane as a helical span at residues 174–195 (FVIYMFIVHFLIPLSNNFFCYG). At 196–223 (RLLCAVKEAAAAQQESETTQRAEREVSR) the chain is on the cytoplasmic side. Residues 224–245 (MVVMMVVSFLMCWLPYASVAWY) traverse the membrane as a helical segment. Over 246 to 257 (IFCNQGSEFGPI) the chain is Extracellular. Residues 258 to 279 (FMTLPAFFAKSSAIYNPLIYIC) form a helical membrane-spanning segment. K267 is subject to N6-(retinylidene)lysine. The Cytoplasmic segment spans residues 280–289 (MNKHVRHCMI).

Belongs to the G-protein coupled receptor 1 family. Opsin subfamily. In terms of processing, phosphorylated on some or all of the serine and threonine residues present in the C-terminal region. Post-translationally, contains one covalently linked retinal chromophore.

The protein localises to the membrane. It is found in the cell projection. The protein resides in the cilium. Its subcellular location is the photoreceptor outer segment. Its function is as follows. Photoreceptor required for image-forming vision at low light intensity. While most salt water fish species use retinal as chromophore, most freshwater fish use 3-dehydroretinal, or a mixture of retinal and 3-dehydroretinal. Light-induced isomerization of 11-cis to all-trans retinal triggers a conformational change that activates signaling via G-proteins. Subsequent receptor phosphorylation mediates displacement of the bound G-protein alpha subunit by arrestin and terminates signaling. This chain is Rhodopsin (rho), found in Cottocomephorus grewingkii (Baikal yellowfin).